A 292-amino-acid polypeptide reads, in one-letter code: Lipoyl synthase (292 aa).

[4Fe-4S] cluster contacts are provided by C38, C43, C49, C64, C68, C71, and S277. One can recognise a Radical SAM core domain in the interval 50 to 266 (WSKGTATFLL…REIALDAGFR (217 aa)).

Belongs to the radical SAM superfamily. Lipoyl synthase family. The cofactor is [4Fe-4S] cluster.

The protein localises to the cytoplasm. The catalysed reaction is [[Fe-S] cluster scaffold protein carrying a second [4Fe-4S](2+) cluster] + N(6)-octanoyl-L-lysyl-[protein] + 2 oxidized [2Fe-2S]-[ferredoxin] + 2 S-adenosyl-L-methionine + 4 H(+) = [[Fe-S] cluster scaffold protein] + N(6)-[(R)-dihydrolipoyl]-L-lysyl-[protein] + 4 Fe(3+) + 2 hydrogen sulfide + 2 5'-deoxyadenosine + 2 L-methionine + 2 reduced [2Fe-2S]-[ferredoxin]. It functions in the pathway protein modification; protein lipoylation via endogenous pathway; protein N(6)-(lipoyl)lysine from octanoyl-[acyl-carrier-protein]: step 2/2. Its function is as follows. Catalyzes the radical-mediated insertion of two sulfur atoms into the C-6 and C-8 positions of the octanoyl moiety bound to the lipoyl domains of lipoate-dependent enzymes, thereby converting the octanoylated domains into lipoylated derivatives. This Chlorobaculum parvum (strain DSM 263 / NCIMB 8327) (Chlorobium vibrioforme subsp. thiosulfatophilum) protein is Lipoyl synthase.